Here is a 91-residue protein sequence, read N- to C-terminus: AIDCKTVDSALLPCVPYLTGGGTPTTDCCKKGVTTIKDISVTTQQKDACNCVKAAANRYPTLKDEVARALPDMCKVKLDIPISRTTNCDAI.

Disulfide bonds link cysteine 4–cysteine 51, cysteine 14–cysteine 28, cysteine 29–cysteine 74, and cysteine 49–cysteine 88.

Detected in seeds (at protein level).

Functionally, plant non-specific lipid-transfer proteins transfer phospholipids as well as galactolipids across membranes. May play a role in wax or cutin deposition in the cell walls of expanding epidermal cells and certain secretory tissues. The sequence is that of Non-specific lipid-transfer protein 1 from Trachyspermum ammi (Ajowan caraway).